The following is a 322-amino-acid chain: Sideroflexin-1 (322 aa).

Residue S2 is modified to N-acetylserine. At 2–102 the chain is on the mitochondrial matrix side; sequence SGEVPPNINI…MSAQVPMNMT (101 aa). The chain crosses the membrane as a helical span at residues 103–120; sequence ITGCMMTFYRTTPAVLFW. Residues 121 to 146 are Mitochondrial intermembrane-facing; the sequence is QWINQSFNAVVNYTNRSGDAPLTVNE. Residues 147 to 167 traverse the membrane as a helical segment; that stretch reads LGTAYVSATTGAVATALGLNA. Residues 168–174 are Mitochondrial matrix-facing; the sequence is LTKRVSP. A helical transmembrane segment spans residues 175-195; the sequence is LIGRFVPFAAVAAANCINIPL. Residues 196-228 lie on the Mitochondrial intermembrane side of the membrane; sequence MRQRELKVGIPVTDENGTRLGESTNAAKQAITQ. The helical transmembrane segment at 229–249 threads the bilayer; the sequence is VVISRILMAAPGMAIPPFIMN. At 250–266 the chain is on the mitochondrial matrix side; that stretch reads TLEKKAFLKRFPWMSAP. The chain crosses the membrane as a helical span at residues 267 to 287; that stretch reads IQVTLVGFCLVFATPLCCALF. The Mitochondrial intermembrane portion of the chain corresponds to 288 to 322; that stretch reads PQKSSMSVTSLEDELQASIQRTHPEIRRVYFNKGL.

Belongs to the sideroflexin family. Widely expressed, with highest expression in kidney and liver.

It is found in the mitochondrion inner membrane. The catalysed reaction is L-serine(in) = L-serine(out). The enzyme catalyses L-alanine(in) = L-alanine(out). It catalyses the reaction L-cysteine(in) = L-cysteine(out). Amino acid transporter importing serine, an essential substrate of the mitochondrial branch of the one-carbon pathway, into mitochondria. Mitochondrial serine is then converted to glycine and formate, which exits to the cytosol where it is used to generate the charged folates that serve as one-carbon donors. May also transport other amino acids including alanine and cysteine. In Mus musculus (Mouse), this protein is Sideroflexin-1.